A 413-amino-acid polypeptide reads, in one-letter code: Multifunctional CCA protein (413 aa).

ATP contacts are provided by Gly-8 and Arg-11. Residues Gly-8 and Arg-11 each coordinate CTP. Positions 21 and 23 each coordinate Mg(2+). The ATP site is built by Arg-91, Arg-137, and Arg-140. CTP-binding residues include Arg-91, Arg-137, and Arg-140. One can recognise an HD domain in the interval 228–329; the sequence is TGIHTLMVLE…VKLFDKADLW (102 aa).

Belongs to the tRNA nucleotidyltransferase/poly(A) polymerase family. Bacterial CCA-adding enzyme type 1 subfamily. Monomer. Can also form homodimers and oligomers. It depends on Mg(2+) as a cofactor. Ni(2+) is required as a cofactor.

The enzyme catalyses a tRNA precursor + 2 CTP + ATP = a tRNA with a 3' CCA end + 3 diphosphate. The catalysed reaction is a tRNA with a 3' CCA end + 2 CTP + ATP = a tRNA with a 3' CCACCA end + 3 diphosphate. Catalyzes the addition and repair of the essential 3'-terminal CCA sequence in tRNAs without using a nucleic acid template. Adds these three nucleotides in the order of C, C, and A to the tRNA nucleotide-73, using CTP and ATP as substrates and producing inorganic pyrophosphate. tRNA 3'-terminal CCA addition is required both for tRNA processing and repair. Also involved in tRNA surveillance by mediating tandem CCA addition to generate a CCACCA at the 3' terminus of unstable tRNAs. While stable tRNAs receive only 3'-terminal CCA, unstable tRNAs are marked with CCACCA and rapidly degraded. In Shewanella loihica (strain ATCC BAA-1088 / PV-4), this protein is Multifunctional CCA protein.